The sequence spans 205 residues: Protein PAXX (205 aa).

One can recognise a PISA domain in the interval 39–81 (FNLYVTDAAELWSTCFSPDSLARLKARFGLSGAEDIHSRFRAA). Threonine 147 carries the phosphothreonine modification. Residues 147–159 (TITSPKKNTQPAG) show a composition bias toward polar residues. The tract at residues 147 to 205 (TITSPKKNTQPAGTQFLPELDHQRGSSGPGVRRRCPGESLINPGFKSKKPAAGVDFDET) is disordered. Serine 150 carries the post-translational modification Phosphoserine. Residues 172-205 (SSGPGVRRRCPGESLINPGFKSKKPAAGVDFDET) form a mediates interaction with XRCC5/Ku80 and XRCC6/Ku70 and association with the non-homologous end joining core complex region. The short motif at 191–205 (FKSKKPAAGVDFDET) is the XLM element.

This sequence belongs to the XRCC4-XLF family. PAXX subfamily. Homodimer. Interacts with the DNA-bound XRCC5/Ku80 and XRCC6/Ku70 heterodimer (Ku complex); the interaction is direct. Associated component of the non-homologous end joining (NHEJ) complex, composed of the core proteins PRKDC, LIG4, XRCC4, XRCC6/Ku70, XRCC5/Ku86 and NHEJ1/XLF. Interacts with POLL (DNA polymerase lambda); promoting POLL recruitment to double-strand breaks (DSBs) and stimulation of the end-filling activity of POLL. Post-translationally, phosphorylation may inhibit interaction with the DNA-bound XRCC5/Ku80 and XRCC6/Ku70 heterodimer (Ku complex).

The protein resides in the nucleus. Its subcellular location is the chromosome. In terms of biological role, non-essential DNA repair protein involved in DNA non-homologous end joining (NHEJ); participates in double-strand break (DSB) repair and V(D)J recombination. May act as a scaffold required for accumulation of the Ku heterodimer, composed of XRCC5/Ku80 and XRCC6/Ku70, at double-strand break sites and promote the assembly and/or stability of the NHEJ machinery. Involved in NHEJ by promoting the ligation of blunt-ended DNA ends. Together with NHEJ1/XLF, collaborates with DNA polymerase lambda (POLL) to promote joining of non-cohesive DNA ends. Constitutes a non-essential component of classical NHEJ: has a complementary but distinct function with NHEJ1/XLF in DNA repair. This Mus musculus (Mouse) protein is Protein PAXX.